A 351-amino-acid chain; its full sequence is Rhodopsin (351 aa).

Residues 1–36 (MNGTEGQDFYVPMSNKTGVVRSPFEYPQYYLAEPWK) lie on the Extracellular side of the membrane. N-linked (GlcNAc...) asparagine glycosylation is found at Asn2 and Asn15. The chain crosses the membrane as a helical span at residues 37 to 61 (FSALAAYMFMLILLGFPVNFLTLYV). Residues 62-73 (TIQHKKLRTPLN) lie on the Cytoplasmic side of the membrane. The chain crosses the membrane as a helical span at residues 74–96 (YILLNLVVADLFMVFGGFTTTMY). Over 97 to 110 (TSMNGYFVFGVTGC) the chain is Extracellular. Cys110 and Cys187 form a disulfide bridge. A helical transmembrane segment spans residues 111 to 133 (YIEGFFATLGGEIALWSLVVLAV). The 'Ionic lock' involved in activated form stabilization motif lies at 134 to 136 (ERY). At 134–152 (ERYVVVCKPMSNFRFGENH) the chain is on the cytoplasmic side. Residues 153 to 173 (AIMGVAFSWIMAMACAAPPLF) traverse the membrane as a helical segment. Topologically, residues 174-202 (GWSRYIPEGMQCSCGIDYYTLKPEINNES) are extracellular. Residues 203 to 224 (FVIYMFVVHFMIPLAVIFFCYG) form a helical membrane-spanning segment. The Cytoplasmic segment spans residues 225-252 (NLVCTVKEAAAQQQESATTQKAEKEVTR). A helical transmembrane segment spans residues 253–274 (MVIIMVIAFLICWVPYASVAFY). The Extracellular portion of the chain corresponds to 275–286 (IFTNQGSDFGPI). A helical membrane pass occupies residues 287 to 308 (FMTIPAFFAKSSAIYNPVIYIV). An N6-(retinylidene)lysine modification is found at Lys296. Residues 309–351 (MNKQFRNCMITTLCCGKNPLGDEDTSAGKTETSSVSTSQVSPA) lie on the Cytoplasmic side of the membrane. 2 S-palmitoyl cysteine lipidation sites follow: Cys322 and Cys323. The tract at residues 331 to 351 (EDTSAGKTETSSVSTSQVSPA) is disordered. Positions 340–351 (TSSVSTSQVSPA) are enriched in low complexity. Position 341 is a phosphoserine; by RK and GRK7 (Ser341).

This sequence belongs to the G-protein coupled receptor 1 family. Opsin subfamily. In terms of processing, contains one covalently linked retinal chromophore. Upon light absorption, the covalently bound 11-cis-retinal is converted to all-trans-retinal. After hydrolysis of the Schiff base and release of the covalently bound all-trans-retinal, active rhodopsin is regenerated by binding of a fresh molecule of 11-cis-retinal.

It is found in the membrane. It localises to the cell projection. The protein resides in the cilium. The protein localises to the photoreceptor outer segment. Photoreceptor required for image-forming vision at low light intensity. Required for photoreceptor cell viability after birth. Light-induced isomerization of 11-cis to all-trans retinal triggers a conformational change that activates signaling via G-proteins. Subsequent receptor phosphorylation mediates displacement of the bound G-protein alpha subunit by arrestin and terminates signaling. This chain is Rhodopsin (RHO), found in Gallus gallus (Chicken).